The primary structure comprises 307 residues: Aspartate carbamoyltransferase catalytic subunit (307 aa).

Residues Arg-58 and Thr-59 each contribute to the carbamoyl phosphate site. Lys-86 contributes to the L-aspartate binding site. Positions 108, 136, and 139 each coordinate carbamoyl phosphate. Residues Arg-169 and Arg-223 each coordinate L-aspartate. Residues Gly-264 and Pro-265 each coordinate carbamoyl phosphate.

It belongs to the aspartate/ornithine carbamoyltransferase superfamily. ATCase family. As to quaternary structure, heterododecamer (2C3:3R2) of six catalytic PyrB chains organized as two trimers (C3), and six regulatory PyrI chains organized as three dimers (R2).

The enzyme catalyses carbamoyl phosphate + L-aspartate = N-carbamoyl-L-aspartate + phosphate + H(+). The protein operates within pyrimidine metabolism; UMP biosynthesis via de novo pathway; (S)-dihydroorotate from bicarbonate: step 2/3. In terms of biological role, catalyzes the condensation of carbamoyl phosphate and aspartate to form carbamoyl aspartate and inorganic phosphate, the committed step in the de novo pyrimidine nucleotide biosynthesis pathway. The polypeptide is Aspartate carbamoyltransferase catalytic subunit (Moorella thermoacetica (strain ATCC 39073 / JCM 9320)).